Consider the following 723-residue polypeptide: MAALRWLSAVVAVSTTVLAITPEQMLSAPRRGEAIPNPSGNVALFSASQYSFDTKEKSSSWNLLNLKTGDITLLTDDANVSEIVWLGGDDTSLLYINGTNAEIPGGVELWVSSVKDFSKGYKAASLGASFSGLKAVRTRSGDIKFAVNAQSYANGTAYNEELATKYASTARIYDSIYVRHWDTYLTTTFNAVFAGTLKKGKHQYASAGPLKNLVAPVKNAESPYPPFGDSTDYDVSPDGKWVAFKSKAPDVPRANYTTAYIYLAPHDGSSTATPINGPDSPGTPEGVQGDANYPVFSPDSRHLAYFQMAHKSYESDRRVLYVYTLGSKTTTPAVAGDWNRSPDSAKWLDNKHLILGSEDHARVRLFGPVPIDADDDFKPQNFTDGGAVSSYHVLPDKTVLVTGTAIWTSWNVYTASPKKGVIKTIASANKIDPGLAGLGPEDISEFYYDGNWTKIQSWIIYPENFDSSKKYPLFFYIHGGPQSATPDSWSTRWNAKVFADQGYVVVAPNPTGSTGFGQELTDAIANNWGGAPYEDLVKAWEYVDKNLPYVDTENGVAAGASYGGFMINWIQGSDLGRKFKALVCHDGTFVADAKISTEELWFIEHDFNGTFWGARDNYRRWDPSAPERILQFSTPQLVIHSDQDYRLPVAEGLAMFNVLQERGVPSRFLNFPDENHWVLKQENSLVWHQQMLGWLNRYSGIEEANPDAVSLDDTIIPVVNYNP.

A signal peptide spans 1 to 19 (MAALRWLSAVVAVSTTVLA). 6 N-linked (GlcNAc...) asparagine glycosylation sites follow: asparagine 79, asparagine 97, asparagine 154, asparagine 255, asparagine 381, and asparagine 451. Catalysis depends on serine 561, which acts as the Charge relay system. Asparagine 608 carries N-linked (GlcNAc...) asparagine glycosylation. Residues aspartate 644 and histidine 676 each act as charge relay system in the active site.

It belongs to the peptidase S9C family.

Its subcellular location is the secreted. Extracellular dipeptidyl-peptidase which removes N-terminal dipeptides sequentially from polypeptides having unsubstituted N-termini. In Aspergillus terreus (strain NIH 2624 / FGSC A1156), this protein is Probable dipeptidyl-peptidase 5 (dpp5).